A 427-amino-acid chain; its full sequence is Putative B3 domain-containing protein Os04g0346900 (427 aa).

2 consecutive DNA-binding regions (TF-B3) follow at residues 25-118 (LVPS…FDTT) and 140-236 (KPQF…FGPN). The disordered stretch occupies residues 253 to 309 (TGEQQEAPSFSRRKCNNKKKSRFGEDDGNQQEMPCSRKGSGNKGRTSDRETKRMRKT). Over residues 263-273 (SRRKCNNKKKS) the composition is skewed to basic residues. The TF-B3 3 DNA-binding region spans 320-427 (WIKKEINEYV…TLWRVDIERC (108 aa)).

The protein localises to the nucleus. In Oryza sativa subsp. japonica (Rice), this protein is Putative B3 domain-containing protein Os04g0346900.